Here is a 236-residue protein sequence, read N- to C-terminus: Segregation and condensation protein A (236 aa).

The protein belongs to the ScpA family. In terms of assembly, component of a cohesin-like complex composed of ScpA, ScpB and the Smc homodimer, in which ScpA and ScpB bind to the head domain of Smc. The presence of the three proteins is required for the association of the complex with DNA.

It localises to the cytoplasm. Participates in chromosomal partition during cell division. May act via the formation of a condensin-like complex containing Smc and ScpB that pull DNA away from mid-cell into both cell halves. The polypeptide is Segregation and condensation protein A (Streptococcus sanguinis (strain SK36)).